Here is an 81-residue protein sequence, read N- to C-terminus: N.vectensis toxin 4 (81 aa).

An N-terminal signal peptide occupies residues 1–20 (MRSSWMFVICFAMLILYTNG). Intrachain disulfides connect C46-C75, C48-C70, and C63-C76.

In terms of tissue distribution, expressed in ectodermal gland cells. In adult female tissues, highly transcribed in mesenteries (gametes-producing tissue) and slightly transcribed in tentacles, pharynx and physa.

Functionally, has toxic effects on zebrafish larvae. It causes contractile paralysis and twitching of the tail within 30 minutes, followed by death within 40 minutes. Does not show any toxicity when injected into arthropods (cherry shrimps or grass shrimps). The protein is N.vectensis toxin 4 of Nematostella vectensis (Starlet sea anemone).